Here is a 330-residue protein sequence, read N- to C-terminus: Anthranilate phosphoribosyltransferase (330 aa).

5-phospho-alpha-D-ribose 1-diphosphate-binding positions include Gly77, 80-81, Thr85, 87-90, 105-113, and Ser117; these read GD, NIST, and KHGNKAVSS. Position 77 (Gly77) interacts with anthranilate. Ser89 contacts Mg(2+). Asn108 provides a ligand contact to anthranilate. Anthranilate is bound at residue Arg163. The Mg(2+) site is built by Asp222 and Glu223.

This sequence belongs to the anthranilate phosphoribosyltransferase family. Homodimer. Mg(2+) serves as cofactor.

It catalyses the reaction N-(5-phospho-beta-D-ribosyl)anthranilate + diphosphate = 5-phospho-alpha-D-ribose 1-diphosphate + anthranilate. It functions in the pathway amino-acid biosynthesis; L-tryptophan biosynthesis; L-tryptophan from chorismate: step 2/5. Catalyzes the transfer of the phosphoribosyl group of 5-phosphorylribose-1-pyrophosphate (PRPP) to anthranilate to yield N-(5'-phosphoribosyl)-anthranilate (PRA). The protein is Anthranilate phosphoribosyltransferase of Pelagibacter ubique (strain HTCC1062).